Here is a 173-residue protein sequence, read N- to C-terminus: Large ribosomal subunit protein bL17 (173 aa).

Positions 136 to 173 (AEEEAPAVEAEATEATEAPVEEAAAVEAEAPADAEKAE) are disordered. Residues 138–149 (EEAPAVEAEATE) show a composition bias toward acidic residues. Positions 150 to 166 (ATEAPVEEAAAVEAEAP) are enriched in low complexity.

It belongs to the bacterial ribosomal protein bL17 family. Part of the 50S ribosomal subunit. Contacts protein L32.

This Bifidobacterium longum subsp. infantis (strain ATCC 15697 / DSM 20088 / JCM 1222 / NCTC 11817 / S12) protein is Large ribosomal subunit protein bL17.